Here is a 198-residue protein sequence, read N- to C-terminus: Recombination protein RecR (198 aa).

The C4-type zinc-finger motif lies at 57–72; sequence CSICGNITEEDPCEIC. The Toprim domain occupies 80 to 175; that stretch reads SIILVVEEPK…TVTRLAHGLS (96 aa).

The protein belongs to the RecR family.

May play a role in DNA repair. It seems to be involved in an RecBC-independent recombinational process of DNA repair. It may act with RecF and RecO. This is Recombination protein RecR from Enterococcus faecalis (strain ATCC 700802 / V583).